An 88-amino-acid polypeptide reads, in one-letter code: U18-hexatoxin-Hi1a (88 aa).

The signal sequence occupies residues 1–17; sequence MRIYSLLILSFLLLASA. A propeptide spanning residues 18-47 is cleaved from the precursor; sequence VLINSAEMPRSEKSLLYSIMQGREDSEEGR. Intrachain disulfides connect Cys-48-Cys-63, Cys-55-Cys-69, Cys-62-Cys-81, and Cys-71-Cys-79.

Belongs to the neurotoxin 07 (Beta/delta-agtx) family. 02 (aga-3) subfamily. In terms of tissue distribution, expressed by the venom gland.

The protein localises to the secreted. Functionally, weak insecticidal toxin with probable ion channel impairing activity. In vivo, induces paralysis when injected into sheep blowflies (L.cuprina). Shows weak toxicity, since it is only toxic at high doses, and flies recover within 24 hours. The chain is U18-hexatoxin-Hi1a from Hadronyche infensa (Fraser island funnel-web spider).